The primary structure comprises 319 residues: Ribonucleoside-diphosphate reductase small chain (319 aa).

Fe cation is bound by residues D70, E101, and H104. Y108 is a catalytic residue. Positions 163, 197, and 200 each coordinate Fe cation. Residues 313–319 are interaction with R1; sequence FSLDVDF.

This sequence belongs to the ribonucleoside diphosphate reductase small chain family. In terms of assembly, interacts with RNR1/OPG080 subunit. Can interact with host RNR1 supunit. The cofactor is Fe cation.

The enzyme catalyses a 2'-deoxyribonucleoside 5'-diphosphate + [thioredoxin]-disulfide + H2O = a ribonucleoside 5'-diphosphate + [thioredoxin]-dithiol. In terms of biological role, ribonucleoside-diphosphate reductase holoenzyme provides the precursors necessary for viral DNA synthesis. Allows virus growth in non-dividing cells. Catalyzes the biosynthesis of deoxyribonucleotides from the corresponding ribonucleotides. The sequence is that of Ribonucleoside-diphosphate reductase small chain (OPG048) from Variola virus.